Here is an 868-residue protein sequence, read N- to C-terminus: MAHRWLILALVAAAAPRALASPGPSLNERQSDDEPFSPPYYPAPNGGWVSTWAEAYEKAHSIVSNLTLAEKVNLTTGTGIFMGPCAGQTGSVPRLGIPNLCLHDSPLGVRNTDHNTAFPPGITVGATFDKSLMYERGVGLGEEARGKGVNVLLGPSVGPLGRKPRGGRNWEGFGFDPVLQGIGGAETIKGMQSTGLIACIKHFVGNEQEMHRMSSVVTQGYSSNIDDRTLHELYIWPFAEGVRAEVGSVMIAYNDVNKSSCSQNSKLINGVLKDELGFQGFVVTDWLAHYGGVSSALAGLDMDMPGDGAVPLFGNSYWGPELSRSILNGTVPVERLNDMVTRILATWYKMGQDQDYPLPNFSSNTEDEKGLLYPGAVISPIGVVNQYVNVQGNHNITARAIARDAITLLKNEGDLLPLRRNDSLKVFGTDAGPDPQGLNSCADKGCNRGVLTMGWGSGTSKLPYLITPQEAIANITPTAEFFITDSFPSSVDANDEDIAIVFINSDSGENYITVDGNPGDRKTSGLHAWHNGDELVKAAAERFSQVVVVIHTVGPIILEEWIDLDSVKAVLIAHLPGQEAGYSLTDVLFGDYSPSGHLPYTIPYQESNYPSSVGLLQQPFGQIQDYYTEGLYIDYRHFLKEDITPRYAFGHGLSYTTFEFSEPALSVVTPLDSAYPPSRPAKGPTPTYPNTIPPASEAAWPAKFNRIWRYIYPYLNNPQADAAVANSSKTYPYPDGYSTDPQPPPRAGGAEGGNPALWDVAFSVQVTVTNTGQHSGRAVAQLYVELPDSLGLDTPSRQLRQFEKTKVLETGQSETLTLEVTRKDVSVWDVEVQDWKTVVGGEGVKIHIGESVLDIRTECEVGGRCVTL.

Residues 1–20 (MAHRWLILALVAAAAPRALA) form the signal peptide. Residues 21 to 40 (SPGPSLNERQSDDEPFSPPY) are disordered. N-linked (GlcNAc...) asparagine glycosylation is found at asparagine 65, asparagine 73, and asparagine 257. Aspartate 285 is an active-site residue. Residues asparagine 328, asparagine 360, asparagine 395, asparagine 421, and asparagine 726 are each glycosylated (N-linked (GlcNAc...) asparagine). The segment at 731-752 (YPYPDGYSTDPQPPPRAGGAEG) is disordered.

This sequence belongs to the glycosyl hydrolase 3 family.

It is found in the secreted. The catalysed reaction is Hydrolysis of terminal, non-reducing beta-D-glucosyl residues with release of beta-D-glucose.. It functions in the pathway glycan metabolism; cellulose degradation. In terms of biological role, beta-glucosidases are one of a number of cellulolytic enzymes involved in the degradation of cellulosic biomass. Catalyzes the last step releasing glucose from the inhibitory cellobiose. The polypeptide is Probable beta-glucosidase F (bglF) (Emericella nidulans (strain FGSC A4 / ATCC 38163 / CBS 112.46 / NRRL 194 / M139) (Aspergillus nidulans)).